The primary structure comprises 301 residues: Ribosomal protein L11 methyltransferase (301 aa).

Threonine 146, glycine 167, aspartate 189, and asparagine 234 together coordinate S-adenosyl-L-methionine.

It belongs to the methyltransferase superfamily. PrmA family.

The protein localises to the cytoplasm. It carries out the reaction L-lysyl-[protein] + 3 S-adenosyl-L-methionine = N(6),N(6),N(6)-trimethyl-L-lysyl-[protein] + 3 S-adenosyl-L-homocysteine + 3 H(+). Its function is as follows. Methylates ribosomal protein L11. The protein is Ribosomal protein L11 methyltransferase of Acinetobacter baumannii (strain AB307-0294).